An 84-amino-acid chain; its full sequence is Small ribosomal subunit protein bS16 (84 aa).

The protein belongs to the bacterial ribosomal protein bS16 family.

The sequence is that of Small ribosomal subunit protein bS16 from Acaryochloris marina (strain MBIC 11017).